The primary structure comprises 582 residues: Heterogeneous nuclear ribonucleoprotein C homolog (582 aa).

The disordered stretch occupies residues 1–21; that stretch reads MSEALETGDPSPPPPIVSENG. 3 C2H2-type zinc fingers span residues 102-125, 130-154, and 213-235; these read YYCC…RGYH, SSCD…RRTH, and YACL…VEMH.

Its subcellular location is the nucleus. In Caenorhabditis elegans, this protein is Heterogeneous nuclear ribonucleoprotein C homolog.